Reading from the N-terminus, the 660-residue chain is U-box domain-containing protein 13 (660 aa).

Positions 227-252 (DDNGEEQKVGVNSRSNGQTSTAASQK) are disordered. The segment covering 236–250 (GVNSRSNGQTSTAAS) has biased composition (polar residues). The 75-residue stretch at 255–329 (VIPDDFRCPI…AQWCEANDIE (75 aa)) folds into the U-box domain. ARM repeat units follow at residues 384–423 (ADNR…NLSI), 425–464 (ENNK…SLSV), 466–505 (DENK…NLCI), 507–546 (QGNK…ILSS), and 548–587 (PEGK…HLCS). Residues 631–660 (AEQQKETAVSQPEEEAEPTHPESTTEAADT) are disordered. Residues 651–660 (PESTTEAADT) show a composition bias toward polar residues.

Binds to SD11, SD16, SD17, SD18, SD113, SD129 and SD25. Post-translationally, phosphorylated by SD1-6 and SD1-7.

The protein localises to the nucleus. The protein resides in the cytoplasm. The catalysed reaction is S-ubiquitinyl-[E2 ubiquitin-conjugating enzyme]-L-cysteine + [acceptor protein]-L-lysine = [E2 ubiquitin-conjugating enzyme]-L-cysteine + N(6)-ubiquitinyl-[acceptor protein]-L-lysine.. It participates in protein modification; protein ubiquitination. Its function is as follows. Functions as an E3 ubiquitin ligase. The chain is U-box domain-containing protein 13 (PUB13) from Arabidopsis thaliana (Mouse-ear cress).